Consider the following 33-residue polypeptide: Fatty acid-binding protein, intestinal (33 aa).

Belongs to the calycin superfamily. Fatty-acid binding protein (FABP) family. As to expression, intestine.

The protein localises to the cytoplasm. In terms of biological role, FABPs are thought to play a role in the intracellular transport of long-chain fatty acids and their acyl-CoA esters. This Rhamdia sapo (South American catfish) protein is Fatty acid-binding protein, intestinal (fabp2).